The following is a 70-amino-acid chain: Large ribosomal subunit protein eL43 (70 aa).

4 residues coordinate Zn(2+): Cys36, Cys39, Cys55, and Cys58. A C4-type zinc finger spans residues 36–58 (CPYCKTTGKVIRLASGIWYCKKC).

This sequence belongs to the eukaryotic ribosomal protein eL43 family. Putative zinc-binding subfamily. Part of the 50S ribosomal subunit. Requires Zn(2+) as cofactor.

Functionally, binds to the 23S rRNA. The protein is Large ribosomal subunit protein eL43 of Saccharolobus solfataricus (strain ATCC 35092 / DSM 1617 / JCM 11322 / P2) (Sulfolobus solfataricus).